A 210-amino-acid polypeptide reads, in one-letter code: RNA chaperone ProQ (210 aa).

The segment at 118-146 (KAAKPEKKRPARRVAAKGQHAKETTTNKA) is disordered. The span at 123–132 (EKKRPARRVA) shows a compositional bias: basic residues.

Belongs to the ProQ family.

It is found in the cytoplasm. RNA chaperone with significant RNA binding, RNA strand exchange and RNA duplexing activities. The polypeptide is RNA chaperone ProQ (Pasteurella multocida (strain Pm70)).